Consider the following 48-residue polypeptide: Small, acid-soluble spore protein P (48 aa).

Positions 1 to 12 (MTNKNDGKDMRK) are enriched in basic and acidic residues. Positions 1 to 48 (MTNKNDGKDMRKNAPKGDNPGQPEPLDGSKKVKNRNHTRQKHNTSHDM) are disordered. The span at 31-48 (KVKNRNHTRQKHNTSHDM) shows a compositional bias: basic residues.

This sequence belongs to the SspP family.

The protein localises to the spore core. This Geobacillus kaustophilus (strain HTA426) protein is Small, acid-soluble spore protein P.